We begin with the raw amino-acid sequence, 123 residues long: Large ribosomal subunit protein bL12 (123 aa).

Belongs to the bacterial ribosomal protein bL12 family. As to quaternary structure, homodimer. Part of the ribosomal stalk of the 50S ribosomal subunit. Forms a multimeric L10(L12)X complex, where L10 forms an elongated spine to which 2 to 4 L12 dimers bind in a sequential fashion. Binds GTP-bound translation factors.

In terms of biological role, forms part of the ribosomal stalk which helps the ribosome interact with GTP-bound translation factors. Is thus essential for accurate translation. The sequence is that of Large ribosomal subunit protein bL12 from Borrelia duttonii (strain Ly).